Consider the following 1092-residue polypeptide: Rho GTPase-activating protein 7 (1092 aa).

The SAM domain maps to L11–E78. 3 positions are modified to phosphoserine: S86, S89, and S129. Disordered regions lie at residues P121 to T179, R297 to L330, G409 to S434, and S492 to G553. Polar residues predominate over residues P130–S143. 2 stretches are compositionally biased toward low complexity: residues V154–S174 and V299–T325. The tract at residues Q275–G448 is focal adhesion-targeting (FAT). A Phosphoserine modification is found at S322. Over residues L415–E426 the composition is skewed to basic and acidic residues. The span at A500–K512 shows a compositional bias: polar residues. Residues I514–S526 show a composition bias toward basic and acidic residues. Polar residues predominate over residues D527–N536. Residues K615–R637 form a polybasic cluster (PBR) region. Residues V642 to F848 form the Rho-GAP domain. One can recognise an START domain in the interval N878–E1085.

Interacts with EF1A1, facilitates EF1A1 distribution to the membrane periphery and ruffles upon growth factor stimulation and suppresses cell migration. Interacts with tensin TNS1 (via N-terminus); the interaction is decreased by phosphorylation of TNS1. Interacts with TNS3 and PTEN; in resting cells, interacts with TNS3 (via C2 tensin-type domain) but, following growth factor stimulation, TNS3 and PTEN are phosphorylated which leads to weakened interaction with TNS3 and enhanced interaction with PTEN. Interacts (via C-terminus) with tensin TNS4 (via SH2 domain); the interaction is independent of tyrosine phosphorylation of DLC1. In terms of tissue distribution, widely expressed with the highest levels in heart, liver and lung.

The protein localises to the cytoplasm. Its subcellular location is the cell junction. It localises to the focal adhesion. It is found in the membrane. In terms of biological role, functions as a GTPase-activating protein for the small GTPases RHOA, RHOB, RHOC and CDC42, terminating their downstream signaling. This induces morphological changes and detachment through cytoskeletal reorganization, playing a critical role in biological processes such as cell migration and proliferation. Also functions in vivo as an activator of the phospholipase PLCD1. Active DLC1 increases cell migration velocity but reduces directionality. Required for growth factor-induced epithelial cell migration; in resting cells, interacts with TNS3 while PTEN interacts with the p85 regulatory subunit of the PI3K kinase complex but growth factor stimulation induces phosphorylation of TNS3 and PTEN, causing them to change their binding preference so that PTEN interacts with DLC1 and TNS3 interacts with p85. The PTEN-DLC1 complex translocates to the posterior of migrating cells to activate RHOA while the TNS3-p85 complex translocates to the leading edge of migrating cells to promote RAC1 activation. This chain is Rho GTPase-activating protein 7 (Dlc1), found in Mus musculus (Mouse).